The sequence spans 1511 residues: Bifunctional glutamate/proline--tRNA ligase (1511 aa).

Positions 164–758 are glutamate--tRNA ligase; it reads GTKWDVSENK…SSVLYNRVAA (595 aa). A 'HIGH' region motif is present at residues 204-214; the sequence is PEASGYLHIGH. The disordered stretch occupies residues 296-315; the sequence is AEQMKAEREQRAESKHRQNS. The span at 299–315 shows a compositional bias: basic and acidic residues; sequence MKAEREQRAESKHRQNS. N6-acetyllysine; alternate is present on lysine 300. Lysine 300 bears the N6-malonyllysine; alternate mark. A Phosphothreonine modification is found at threonine 355. Lysine 417 bears the N6-acetyllysine mark. The 'KMSKS' region motif lies at 432-436; it reads VLSKR. Position 434 is a phosphoserine (serine 434). An N6-acetyllysine mark is found at lysine 498, lysine 535, lysine 542, and lysine 637. Residues 708-728 show a composition bias toward basic and acidic residues; the sequence is KEMPTSGSKEKTKAEPLKKET. A disordered region spans residues 708–741; the sequence is KEMPTSGSKEKTKAEPLKKETSSAPKEGPVPAVS. Serine 746 carries the post-translational modification Phosphoserine. Residues 748–804 form the WHEP-TRS 1 domain; sequence ESSVLYNRVAAQGDVVRELKAKKAAKEDVDAAVKQLLALKAEYKQKTGQEYKPGNPP. Positions 759-955 are 3 X 57 AA approximate repeats; it reads QGDVVRELKA…GIEYKPVSAT (197 aa). At lysine 787 the chain carries N6-acetyllysine. The interval 794-823 is disordered; that stretch reads TGQEYKPGNPPSAAAQSASTKSLPSAGEDR. Residues 807 to 816 show a composition bias toward polar residues; sequence AAQSASTKSL. The 57-residue stretch at 821-877 folds into the WHEP-TRS 2 domain; sequence EDRSLYDKIAAQGEVVRKLKAEKAPKAKVTEAVECLLSLKAEYKEKTGKEYVPGQPP. At lysine 860 the chain carries N6-acetyllysine. 2 disordered regions span residues 868–903 and 952–1015; these read GKEYVPGQPPASQKSQPSPASKAEPAGPETTEAKAL and VSAT…RLGL. A Phosphotyrosine modification is found at tyrosine 871. The segment covering 877–890 has biased composition (low complexity); it reads PASQKSQPSPASKA. Serine 885 is subject to Phosphoserine; by CDK5. Position 897 is a phosphothreonine (threonine 897). A WHEP-TRS 3 domain is found at 899-955; sequence EAKALFDRVACQGEVVRKLKAEKASKDQVDPAVQELLQLKAQYKSLTGIEYKPVSAT. Over residues 957–975 the composition is skewed to basic and acidic residues; that stretch reads SEDKDKKKKEKENKSEKQN. Residues 992–1005 show a composition bias toward gly residues; sequence QGGGLSSSGAGEGQ. At serine 997 the chain carries Phosphoserine. The residue at position 998 (serine 998) is a Phosphoserine; by RPS6KB1. A Phosphoserine modification is found at serine 999. The tract at residues 1006 to 1511 is proline--tRNA ligase; that stretch reads GPKKQTRLGL…KFYTLFGRSY (506 aa). Residues 1120 to 1122 and arginine 1151 contribute to the L-proline site; that span reads TSE. Residues arginine 1151, glutamate 1153, arginine 1162, threonine 1163, glutamine 1236, and threonine 1239 each coordinate ATP. Arginine 1151 carries the post-translational modification Omega-N-methylarginine. Glutamine 1236 provides a ligand contact to Mg(2+). An L-proline-binding site is contributed by histidine 1241. ATP is bound by residues threonine 1275 and arginine 1277. A Phosphoserine modification is found at serine 1349. Zn(2+) is bound by residues cysteine 1447, cysteine 1452, cysteine 1494, and cysteine 1496. Position 1502 is an N6-acetyllysine (lysine 1502).

In the N-terminal section; belongs to the class-I aminoacyl-tRNA synthetase family. Glutamate--tRNA ligase type 2 subfamily. It in the C-terminal section; belongs to the class-II aminoacyl-tRNA synthetase family. In terms of assembly, homodimer. Part of the aminoacyl-tRNA synthetase multienzyme complex, also know as multisynthetase complex, that is composed of the tRNA ligases for Arg (RARS1), Asp (DARS1), Gln (QARS1), Ile (IARS1), Leu (LARS1), Lys (KARS1), Met (MARS1) the bifunctional ligase for Glu and Pro (EPRS1) and the auxiliary subunits AIMP1/p43, AIMP2/p38 and EEF1E1/p18. Forms a linear complex that contains MARS1, EEF1E1, EPRS1 and AIMP2 that is at the core of the multisubunit complex. Interacts with TARS3. Interacts with DUS2L. Component of the GAIT complex which is composed of EPRS1, RPL13A and GAPDH. Interacts (phosphorylated at Ser-998) with SLC27A1; mediates the translocation of SLC27A1 from the cytoplasm to the plasma membrane thereby increasing the uptake of long-chain fatty acids. Phosphorylated at Ser-998 by RPS6KB1; triggers EPRS1 release from the aminoacyl-tRNA synthetase multienzyme complex. In monocytes, the IFN-gamma-induced phosphorylation at Ser-998 releases EPRS1 from the aminoacyl-tRNA synthetase multienzyme complex, allowing its association with the GAIT complex. Phosphorylation at Ser-998 is specifically required for the RPL13A-mediated interaction of the GAIT complex with eIF4G. Phosphorylation at Ser-998 by RPS6KB1, is also induced by insulin through activation of the mTORC1 signaling pathway and promotes the interaction of EPRS1 with SLC27A1.

Its subcellular location is the cytoplasm. The protein resides in the cytosol. It localises to the membrane. It carries out the reaction tRNA(Glu) + L-glutamate + ATP = L-glutamyl-tRNA(Glu) + AMP + diphosphate. The enzyme catalyses tRNA(Pro) + L-proline + ATP = L-prolyl-tRNA(Pro) + AMP + diphosphate. Its function is as follows. Multifunctional protein which primarily functions within the aminoacyl-tRNA synthetase multienzyme complex, also known as multisynthetase complex. Within the complex it catalyzes the attachment of both L-glutamate and L-proline to their cognate tRNAs in a two-step reaction where the amino acid is first activated by ATP to form a covalent intermediate with AMP. Subsequently, the activated amino acid is transferred to the acceptor end of the cognate tRNA to form L-glutamyl-tRNA(Glu) and L-prolyl-tRNA(Pro). Upon interferon-gamma stimulation, EPRS1 undergoes phosphorylation, causing its dissociation from the aminoacyl-tRNA synthetase multienzyme complex. It is recruited to form the GAIT complex, which binds to stem loop-containing GAIT elements found in the 3'-UTR of various inflammatory mRNAs, such as ceruloplasmin. The GAIT complex inhibits the translation of these mRNAs, allowing interferon-gamma to redirect the function of EPRS1 from protein synthesis to translation inhibition in specific cell contexts. Furthermore, it can function as a downstream effector in the mTORC1 signaling pathway, by promoting the translocation of SLC27A1 from the cytoplasm to the plasma membrane where it mediates the uptake of long-chain fatty acid by adipocytes. Thereby, EPRS1 also plays a role in fat metabolism and more indirectly influences lifespan. This is Bifunctional glutamate/proline--tRNA ligase from Cricetulus griseus (Chinese hamster).